Here is a 473-residue protein sequence, read N- to C-terminus: Photosystem II CP43 reaction center protein (473 aa).

The propeptide occupies 1–14; sequence MKTLYSLRRFYPVE. An N-acetylthreonine modification is found at threonine 15. Threonine 15 carries the post-translational modification Phosphothreonine. 5 helical membrane passes run 69-93, 134-155, 178-200, 255-275, and 291-312; these read LFEV…PHLA, LLGP…KDRN, KALY…RKIT, KPFA…LSYS, and WFNN…ASQA. Glutamate 367 lines the [CaMn4O5] cluster pocket. The chain crosses the membrane as a helical span at residues 447 to 471; the sequence is RARAAAAGFEKGIDRDFEPVLSMTP.

Belongs to the PsbB/PsbC family. PsbC subfamily. PSII is composed of 1 copy each of membrane proteins PsbA, PsbB, PsbC, PsbD, PsbE, PsbF, PsbH, PsbI, PsbJ, PsbK, PsbL, PsbM, PsbT, PsbX, PsbY, PsbZ, Psb30/Ycf12, at least 3 peripheral proteins of the oxygen-evolving complex and a large number of cofactors. It forms dimeric complexes. The cofactor is Binds multiple chlorophylls and provides some of the ligands for the Ca-4Mn-5O cluster of the oxygen-evolving complex. It may also provide a ligand for a Cl- that is required for oxygen evolution. PSII binds additional chlorophylls, carotenoids and specific lipids..

The protein resides in the plastid. Its subcellular location is the chloroplast thylakoid membrane. Functionally, one of the components of the core complex of photosystem II (PSII). It binds chlorophyll and helps catalyze the primary light-induced photochemical processes of PSII. PSII is a light-driven water:plastoquinone oxidoreductase, using light energy to abstract electrons from H(2)O, generating O(2) and a proton gradient subsequently used for ATP formation. The sequence is that of Photosystem II CP43 reaction center protein from Liriodendron tulipifera (Tuliptree).